A 597-amino-acid polypeptide reads, in one-letter code: DNA polymerase III subunit gamma/tau (597 aa).

44 to 51 (GERGTGKT) is a binding site for ATP. Cys63, Cys72, Cys75, and Cys78 together coordinate Zn(2+).

Belongs to the DnaX/STICHEL family. In terms of assembly, DNA polymerase III contains a core (composed of alpha, epsilon and theta chains) that associates with a tau subunit. This core dimerizes to form the POLIII' complex. PolIII' associates with the gamma complex (composed of gamma, delta, delta', psi and chi chains) and with the beta chain to form the complete DNA polymerase III complex.

It catalyses the reaction DNA(n) + a 2'-deoxyribonucleoside 5'-triphosphate = DNA(n+1) + diphosphate. Its function is as follows. DNA polymerase III is a complex, multichain enzyme responsible for most of the replicative synthesis in bacteria. This DNA polymerase also exhibits 3' to 5' exonuclease activity. The protein is DNA polymerase III subunit gamma/tau (dnaX) of Mycoplasma genitalium (strain ATCC 33530 / DSM 19775 / NCTC 10195 / G37) (Mycoplasmoides genitalium).